We begin with the raw amino-acid sequence, 577 residues long: Phosphoethanolamine transferase EptC (577 aa).

A run of 5 helical transmembrane segments spans residues 17-37 (LGWALLYFWFFSTLLQAIIYI), 44-64 (NGIRDSLLFSSLWLIPVFLFP), 69-89 (IIAAVIGVVLWAASLAALCYY), 119-139 (YFSLKIVLIALAYTAVAVLLW), and 154-174 (VVSFALLYGLILHPIAMNTFI).

The protein belongs to the phosphoethanolamine transferase family. EptC/CptA subfamily. Forms a complex with an unidentified protein of approximately 36 kDa.

The protein resides in the cell inner membrane. It participates in bacterial outer membrane biogenesis; LPS core biosynthesis. Catalyzes the addition of a phosphoethanolamine moiety to the outer membrane lipopolysaccharide core. In Escherichia coli (strain K12), this protein is Phosphoethanolamine transferase EptC (eptC).